The primary structure comprises 279 residues: Shikimate dehydrogenase (NADP(+)) (279 aa).

Shikimate contacts are provided by residues Ser-19–Ser-21 and Thr-66. Lys-70 acts as the Proton acceptor in catalysis. Residues Asn-91 and Asp-106 each coordinate shikimate. NADP(+) contacts are provided by residues Gly-129–Ala-133 and Phe-222. Tyr-224 contacts shikimate. Gly-243 is an NADP(+) binding site.

Belongs to the shikimate dehydrogenase family. As to quaternary structure, homodimer.

The catalysed reaction is shikimate + NADP(+) = 3-dehydroshikimate + NADPH + H(+). Its pathway is metabolic intermediate biosynthesis; chorismate biosynthesis; chorismate from D-erythrose 4-phosphate and phosphoenolpyruvate: step 4/7. Its function is as follows. Involved in the biosynthesis of the chorismate, which leads to the biosynthesis of aromatic amino acids. Catalyzes the reversible NADPH linked reduction of 3-dehydroshikimate (DHSA) to yield shikimate (SA). The polypeptide is Shikimate dehydrogenase (NADP(+)) (Anaeromyxobacter sp. (strain Fw109-5)).